We begin with the raw amino-acid sequence, 955 residues long: Leucine--tRNA ligase (955 aa).

A 'HIGH' region motif is present at residues 51-61 (PYLNGVLHAGH). A 'KMSKS' region motif is present at residues 647-651 (KLSKS). Position 650 (Lys650) interacts with ATP.

Belongs to the class-I aminoacyl-tRNA synthetase family.

The protein localises to the cytoplasm. It catalyses the reaction tRNA(Leu) + L-leucine + ATP = L-leucyl-tRNA(Leu) + AMP + diphosphate. This chain is Leucine--tRNA ligase, found in Methanococcus maripaludis (strain C5 / ATCC BAA-1333).